The sequence spans 240 residues: Large ribosomal subunit protein bL25 (240 aa).

Disordered regions lie at residues 1 to 23 (MATV…ARAE) and 207 to 240 (PAAA…AKKK).

It belongs to the bacterial ribosomal protein bL25 family. CTC subfamily. In terms of assembly, part of the 50S ribosomal subunit; part of the 5S rRNA/L5/L18/L25 subcomplex. Contacts the 5S rRNA. Binds to the 5S rRNA independently of L5 and L18.

This is one of the proteins that binds to the 5S RNA in the ribosome where it forms part of the central protuberance. This chain is Large ribosomal subunit protein bL25, found in Rhodopseudomonas palustris (strain BisB18).